The following is a 244-amino-acid chain: Na(+)-translocating NADH-quinone reductase subunit E (244 aa).

Transmembrane regions (helical) follow at residues 11–31 (LLGIFLQATFIQNILLSTFLG), 47–67 (GLGMSVALVLTITGSINWLIH), 90–110 (FLELITFIVVIAAFTQILELL), 123–143 (GIFLPLIAVNCAILGGVLFGI), 153–173 (VVFSLGSGCGWWLAIVLFATI), and 189–209 (MGISFITTGLIAMAFMGLTGI).

Belongs to the NqrDE/RnfAE family. In terms of assembly, composed of six subunits; NqrA, NqrB, NqrC, NqrD, NqrE and NqrF.

The protein resides in the cell inner membrane. The enzyme catalyses a ubiquinone + n Na(+)(in) + NADH + H(+) = a ubiquinol + n Na(+)(out) + NAD(+). Its function is as follows. NQR complex catalyzes the reduction of ubiquinone-1 to ubiquinol by two successive reactions, coupled with the transport of Na(+) ions from the cytoplasm to the periplasm. NqrA to NqrE are probably involved in the second step, the conversion of ubisemiquinone to ubiquinol. The polypeptide is Na(+)-translocating NADH-quinone reductase subunit E (Chlamydia muridarum (strain MoPn / Nigg)).